Here is a 354-residue protein sequence, read N- to C-terminus: Chorismate synthase (354 aa).

Residue Arg46 participates in NADP(+) binding. FMN contacts are provided by residues 123-125, 239-240, Gly284, 299-303, and Arg325; these read RSS, NA, and KPVAT.

This sequence belongs to the chorismate synthase family. Homotetramer. The cofactor is FMNH2.

It catalyses the reaction 5-O-(1-carboxyvinyl)-3-phosphoshikimate = chorismate + phosphate. The protein operates within metabolic intermediate biosynthesis; chorismate biosynthesis; chorismate from D-erythrose 4-phosphate and phosphoenolpyruvate: step 7/7. Functionally, catalyzes the anti-1,4-elimination of the C-3 phosphate and the C-6 proR hydrogen from 5-enolpyruvylshikimate-3-phosphate (EPSP) to yield chorismate, which is the branch point compound that serves as the starting substrate for the three terminal pathways of aromatic amino acid biosynthesis. This reaction introduces a second double bond into the aromatic ring system. In Azobacteroides pseudotrichonymphae genomovar. CFP2, this protein is Chorismate synthase.